Here is a 348-residue protein sequence, read N- to C-terminus: Protein RecA (348 aa).

ATP is bound at residue 66 to 73 (GPESSGKT).

The protein belongs to the RecA family.

Its subcellular location is the cytoplasm. In terms of biological role, can catalyze the hydrolysis of ATP in the presence of single-stranded DNA, the ATP-dependent uptake of single-stranded DNA by duplex DNA, and the ATP-dependent hybridization of homologous single-stranded DNAs. It interacts with LexA causing its activation and leading to its autocatalytic cleavage. The protein is Protein RecA of Legionella pneumophila (strain Lens).